Here is a 313-residue protein sequence, read N- to C-terminus: MIIVTGGAGMIGSNIVKALNEIGINDILVVDNLKNGRKFKNLVDLDITDYMDRDDFLTQIMAGDNFGPIEAVFHEGACSATTEWDGKYMMLNNYEYSKELLHYCLEREIPFLYASSAATYGETTVFKEEREYEGALNVYGYSKQQFDNYVRRLWQDAEEHGETLSQITGFRYFNVYGPREQHKGSMASVAFHLNNQILAGENPKLFAGSEQFKRDFIYVGDVCKVNLWFMQNGVSGIFNCGTGNAESFEEVAKAVIKHHGKGEIETIPFPEHLKGAYQEFTQADLTKLRAAGCDVEFKTVAEGVAEYMAIVNG.

NADP(+) contacts are provided by residues 10–11 (MI), 31–32 (DN), K38, R53, 75–79 (EGACS), and N92. Catalysis depends on Y139, which acts as the Proton acceptor. Residue K143 coordinates NADP(+). Substrate is bound at residue N174. V175 and K183 together coordinate NADP(+). Catalysis depends on K183, which acts as the Proton acceptor. Residues S185, H192, 206–209 (FAGS), R214, and Y277 each bind substrate.

This sequence belongs to the NAD(P)-dependent epimerase/dehydratase family. HldD subfamily. In terms of assembly, homopentamer. Requires NADP(+) as cofactor.

It catalyses the reaction ADP-D-glycero-beta-D-manno-heptose = ADP-L-glycero-beta-D-manno-heptose. It functions in the pathway nucleotide-sugar biosynthesis; ADP-L-glycero-beta-D-manno-heptose biosynthesis; ADP-L-glycero-beta-D-manno-heptose from D-glycero-beta-D-manno-heptose 7-phosphate: step 4/4. The protein operates within bacterial outer membrane biogenesis; LPS core biosynthesis. Its function is as follows. Catalyzes the interconversion between ADP-D-glycero-beta-D-manno-heptose and ADP-L-glycero-beta-D-manno-heptose via an epimerization at carbon 6 of the heptose. This is ADP-L-glycero-D-manno-heptose-6-epimerase from Vibrio vulnificus (strain CMCP6).